Here is a 645-residue protein sequence, read N- to C-terminus: ATP-dependent zinc metalloprotease FtsH 1 (645 aa).

Topologically, residues 1-6 (MRSTQK) are cytoplasmic. Residues 7–27 (TLALWFFLIIMAVFLFQAYES) form a helical membrane-spanning segment. The Periplasmic portion of the chain corresponds to 28 to 110 (KQQKAIADFN…NYERADNGGF (83 aa)). The chain crosses the membrane as a helical span at residues 111–131 (FQSLLVNWLPLILIVAMFLFI). The Cytoplasmic segment spans residues 132-645 (MRQIQAGGGK…PVGNTGPVTI (514 aa)). Position 203–210 (203–210 (GSPGTGKT)) interacts with ATP. His425 is a binding site for Zn(2+). Glu426 is an active-site residue. Zn(2+) is bound by residues His429 and Asp501.

It in the central section; belongs to the AAA ATPase family. The protein in the C-terminal section; belongs to the peptidase M41 family. Homohexamer. The cofactor is Zn(2+).

The protein resides in the cell inner membrane. Its function is as follows. Acts as a processive, ATP-dependent zinc metallopeptidase for both cytoplasmic and membrane proteins. Plays a role in the quality control of integral membrane proteins. This chain is ATP-dependent zinc metalloprotease FtsH 1, found in Bdellovibrio bacteriovorus (strain ATCC 15356 / DSM 50701 / NCIMB 9529 / HD100).